Here is a 214-residue protein sequence, read N- to C-terminus: Nucleoside triphosphate pyrophosphatase (214 aa).

The Proton acceptor role is filled by D79.

This sequence belongs to the Maf family. It depends on a divalent metal cation as a cofactor.

It is found in the cytoplasm. It catalyses the reaction a ribonucleoside 5'-triphosphate + H2O = a ribonucleoside 5'-phosphate + diphosphate + H(+). It carries out the reaction a 2'-deoxyribonucleoside 5'-triphosphate + H2O = a 2'-deoxyribonucleoside 5'-phosphate + diphosphate + H(+). In terms of biological role, nucleoside triphosphate pyrophosphatase. May have a dual role in cell division arrest and in preventing the incorporation of modified nucleotides into cellular nucleic acids. The sequence is that of Nucleoside triphosphate pyrophosphatase from Rhodococcus jostii (strain RHA1).